The chain runs to 338 residues: N-acetyl-gamma-glutamyl-phosphate reductase (338 aa).

Cys148 is a catalytic residue.

The protein belongs to the NAGSA dehydrogenase family. Type 1 subfamily.

The protein localises to the cytoplasm. The enzyme catalyses N-acetyl-L-glutamate 5-semialdehyde + phosphate + NADP(+) = N-acetyl-L-glutamyl 5-phosphate + NADPH + H(+). Its pathway is amino-acid biosynthesis; L-arginine biosynthesis; N(2)-acetyl-L-ornithine from L-glutamate: step 3/4. Its function is as follows. Catalyzes the NADPH-dependent reduction of N-acetyl-5-glutamyl phosphate to yield N-acetyl-L-glutamate 5-semialdehyde. The sequence is that of N-acetyl-gamma-glutamyl-phosphate reductase from Leptospira interrogans serogroup Icterohaemorrhagiae serovar Lai (strain 56601).